Here is a 67-residue protein sequence, read N- to C-terminus: Prokaryotic ubiquitin-like protein Pup (67 aa).

Positions 1–36 (MPQQFEQPQAQQAATQEDDALATTQAAAQTESADQA) are disordered. The ARC ATPase binding stretch occupies residues 23-61 (TTQAAAQTESADQADVLDDILDDIESTLETNAEEYVNSF). Residue E67 forms an Isoglutamyl lysine isopeptide (Glu-Lys) (interchain with K-? in acceptor proteins) linkage.

It belongs to the prokaryotic ubiquitin-like protein family. As to quaternary structure, strongly interacts with the proteasome-associated ATPase ARC through a hydrophobic interface; the interacting region of Pup lies in its C-terminal half. There is one Pup binding site per ARC hexamer ring.

Its pathway is protein degradation; proteasomal Pup-dependent pathway. Its function is as follows. Protein modifier that is covalently attached to lysine residues of substrate proteins, thereby targeting them for proteasomal degradation. The tagging system is termed pupylation. The chain is Prokaryotic ubiquitin-like protein Pup from Bifidobacterium longum (strain DJO10A).